The primary structure comprises 117 residues: Thioredoxin (117 aa).

A Thioredoxin domain is found at 2 to 116 (AISLTEEDFV…FENIIKDFFG (115 aa)). A disulfide bridge connects residues Cys40 and Cys43.

It belongs to the thioredoxin family.

In terms of biological role, participates in various redox reactions through the reversible oxidation of its active center dithiol to a disulfide and catalyzes dithiol-disulfide exchange reactions. This chain is Thioredoxin (trxA), found in Borreliella burgdorferi (strain ATCC 35210 / DSM 4680 / CIP 102532 / B31) (Borrelia burgdorferi).